The sequence spans 461 residues: Glyceraldehyde-3-phosphate dehydrogenase-like protein (461 aa).

Thr-421 bears the Phosphothreonine mark.

It belongs to the glyceraldehyde-3-phosphate dehydrogenase family.

This Pseudomonas aeruginosa (strain UCBPP-PA14) protein is Glyceraldehyde-3-phosphate dehydrogenase-like protein (gap2).